The following is a 678-amino-acid chain: Transcriptional regulator CRZ1 (678 aa).

Positions 1–21 (MSFSNGNMASYMTSSNGEEQS) are enriched in polar residues. Disordered stretches follow at residues 1–50 (MSFS…SHTF) and 159–195 (TPAD…NYSD). Low complexity predominate over residues 34-47 (YRRNNFRNSSNSGS). Positions 166–195 (RPSLTNQFLSPRSNYDGTTRSSGIDSNYSD) are enriched in polar residues. Phosphothreonine is present on threonine 170. A phosphoserine mark is found at serine 175, serine 245, and serine 385. Residues 401 to 486 (KLKKSRRRSS…SNFNEDNNNN (86 aa)) are disordered. The segment covering 410–428 (SQTSNNSFTSRRSSRSRSI) has biased composition (low complexity). Composition is skewed to basic and acidic residues over residues 429 to 446 (SPDE…KLLE) and 457 to 467 (DNNRERYDNDS). The span at 472–486 (NTINSSNFNEDNNNN) shows a compositional bias: low complexity. C2H2-type zinc fingers lie at residues 569–591 (FACD…LRTH) and 597–619 (FICS…EDLH).

Post-translationally, phosphorylated. Dephosphorylated by calcineurin which leads to rapid translocation from the cytoplasm to the nucleus. Phosphorylated by the cyclin-CDK PHO80-PHO85.

The protein resides in the nucleus. It is found in the cytoplasm. Its function is as follows. Involved in the regulation of calcium ion homeostasis. Binds to the calcineurin-dependent response element. Transcriptionally regulates PMC1, PMR1, PMR2A and FKS2. This is Transcriptional regulator CRZ1 (CRZ1) from Saccharomyces cerevisiae (strain ATCC 204508 / S288c) (Baker's yeast).